The sequence spans 411 residues: MASGGVAPASGFIDKNASSVGVEKLPEEMNDMKIRDDKEMEAATIVDGNGTETGHIIVTTIGGKNGQPKQTISYMAERVVGHGSFGVVFQAKCLETGETVAIKKVLQDKRYKNRELQTMRLLDHPNVVSLKHCFFSTTEKDELYLNLVLEYVPETVSRVIRHYNKMNQRMPMIYVKLYSYQICRALAYIHNSIGVCHRDIKPQNLLVNPHTHQLKICDFGSAKVLVKGEPNISYICSRYYRAPELIFGATEYTTAIDIWSAGCVLGELLLGQPLFPGESGVDQLVEIIKVLGTPTREEIKCMNPNYTEFKFPQIKAHPWHKIFHKRMPPEAVDLVSRLLQYSPNLRSTALEALVHPFYDDVRDPNTRLPNGRFLPPLFNFKVNELKGVPAEMLVKLVPPHARKQCALFGSS.

In terms of domain architecture, Protein kinase spans 74-358 (YMAERVVGHG…ALEALVHPFY (285 aa)). Residues 80 to 88 (VGHGSFGVV) and Lys103 each bind ATP. Asp199 (proton acceptor) is an active-site residue. The residue at position 234 (Tyr234) is a Phosphotyrosine.

This sequence belongs to the protein kinase superfamily. CMGC Ser/Thr protein kinase family. GSK-3 subfamily. As to expression, absent in leaves and petioles, very low levels are seen in the stems and roots while a moderate expression is seen in the nodes.

It catalyses the reaction L-seryl-[protein] + ATP = O-phospho-L-seryl-[protein] + ADP + H(+). It carries out the reaction L-threonyl-[protein] + ATP = O-phospho-L-threonyl-[protein] + ADP + H(+). The sequence is that of Glycogen synthase kinase-3 homolog MsK-3 (MSK-3) from Medicago sativa (Alfalfa).